The following is a 450-amino-acid chain: 23S rRNA (uracil(1939)-C(5))-methyltransferase RlmD (450 aa).

The TRAM domain maps to Ser12–Lys70. [4Fe-4S] cluster-binding residues include Cys83, Cys89, Cys92, and Cys171. Residues Gln283, Phe312, Asn317, Glu333, Asp360, and Asp380 each coordinate S-adenosyl-L-methionine. The active-site Nucleophile is the Cys406.

The protein belongs to the class I-like SAM-binding methyltransferase superfamily. RNA M5U methyltransferase family. RlmD subfamily.

It carries out the reaction uridine(1939) in 23S rRNA + S-adenosyl-L-methionine = 5-methyluridine(1939) in 23S rRNA + S-adenosyl-L-homocysteine + H(+). Functionally, catalyzes the formation of 5-methyl-uridine at position 1939 (m5U1939) in 23S rRNA. In Shewanella baltica (strain OS195), this protein is 23S rRNA (uracil(1939)-C(5))-methyltransferase RlmD.